We begin with the raw amino-acid sequence, 185 residues long: Ribosome-recycling factor (185 aa).

Residues 145 to 164 (DGEAGEDEVSRAEKDLDKTT) are disordered.

Belongs to the RRF family.

It is found in the cytoplasm. Responsible for the release of ribosomes from messenger RNA at the termination of protein biosynthesis. May increase the efficiency of translation by recycling ribosomes from one round of translation to another. This is Ribosome-recycling factor from Mycobacterium sp. (strain JLS).